Consider the following 373-residue polypeptide: Molybdenum import ATP-binding protein ModC (373 aa).

The ABC transporter domain occupies 4–240 (LTPPTIRAAF…PKLPLAIARD (237 aa)). 38 to 45 (GPSGCGKS) is a binding site for ATP. A Mop domain is found at 299-369 (ASSILNAIAA…IKGVALAPGR (71 aa)).

Belongs to the ABC transporter superfamily. Molybdate importer (TC 3.A.1.8) family. As to quaternary structure, the complex is composed of two ATP-binding proteins (ModC), two transmembrane proteins (ModB) and a solute-binding protein (ModA).

The protein resides in the cell inner membrane. It carries out the reaction molybdate(out) + ATP + H2O = molybdate(in) + ADP + phosphate + H(+). Functionally, part of the ABC transporter complex ModABC involved in molybdenum import. Responsible for energy coupling to the transport system. The chain is Molybdenum import ATP-binding protein ModC from Rhodopseudomonas palustris (strain ATCC BAA-98 / CGA009).